We begin with the raw amino-acid sequence, 295 residues long: NAD kinase (295 aa).

Asp74 functions as the Proton acceptor in the catalytic mechanism. NAD(+) is bound by residues 74–75 (DG), 148–149 (ND), His159, Arg176, Asp178, and 189–194 (TAYALS).

It belongs to the NAD kinase family. It depends on a divalent metal cation as a cofactor.

It localises to the cytoplasm. It carries out the reaction NAD(+) + ATP = ADP + NADP(+) + H(+). Involved in the regulation of the intracellular balance of NAD and NADP, and is a key enzyme in the biosynthesis of NADP. Catalyzes specifically the phosphorylation on 2'-hydroxyl of the adenosine moiety of NAD to yield NADP. The polypeptide is NAD kinase (Legionella pneumophila (strain Paris)).